Here is a 465-residue protein sequence, read N- to C-terminus: GTPase Der (465 aa).

2 consecutive EngA-type G domains span residues 3 to 166 and 184 to 358; these read FLVA…LNEY and IHFS…ACAN. Residues 9–16, 56–60, 118–121, 190–197, 237–241, and 302–305 contribute to the GTP site; these read GRANVGKS, DTGGI, NKVD, GRPNVGKS, DTAGV, and NKWD. Residues 359–443 enclose the KH-like domain; sequence KKITTADATR…PIVFEFKQSE (85 aa). Residues 446–465 form a disordered region; the sequence is FADRKNKRSKDEGSKSKKVK.

The protein belongs to the TRAFAC class TrmE-Era-EngA-EngB-Septin-like GTPase superfamily. EngA (Der) GTPase family. In terms of assembly, associates with the 50S ribosomal subunit.

In terms of biological role, GTPase that plays an essential role in the late steps of ribosome biogenesis. The sequence is that of GTPase Der from Francisella tularensis subsp. holarctica (strain FTNF002-00 / FTA).